Reading from the N-terminus, the 572-residue chain is NADH-ubiquinone oxidoreductase chain 5 (572 aa).

17 helical membrane-spanning segments follow: residues 6–26 (FFFL…YLMI), 44–64 (VVMT…VMYI), 86–106 (IMIV…PNLI), 107–127 (SILL…IYYQ), 147–167 (VAIL…YIYY), 179–201 (IITL…SSWL), 208–230 (PTPV…LLIR), 234–254 (MLMV…TMFM), 268–288 (IIAL…SMGY), 291–311 (LAFF…MCAG), 337–357 (SICF…AGFY), 372–394 (NFFI…FRLF), 422–442 (IGLL…IFPV), 454–474 (FLTL…SDFV), 479–499 (LFSL…FMPF), 524–544 (WGEL…INYI), and 552–572 (FKVY…LFFL).

Belongs to the complex I subunit 5 family.

The protein resides in the mitochondrion inner membrane. The enzyme catalyses a ubiquinone + NADH + 5 H(+)(in) = a ubiquinol + NAD(+) + 4 H(+)(out). Its function is as follows. Core subunit of the mitochondrial membrane respiratory chain NADH dehydrogenase (Complex I) that is believed to belong to the minimal assembly required for catalysis. Complex I functions in the transfer of electrons from NADH to the respiratory chain. The immediate electron acceptor for the enzyme is believed to be ubiquinone. The sequence is that of NADH-ubiquinone oxidoreductase chain 5 (ND5) from Locusta migratoria (Migratory locust).